The sequence spans 174 residues: Protein GrpE (174 aa).

The interval 1–35 (MAQDIKNEEVEEVQEEEVVETAEETTPEKSELDLA) is disordered. Residues 9 to 25 (EVEEVQEEEVVETAEET) show a composition bias toward acidic residues. Positions 26–35 (TPEKSELDLA) are enriched in basic and acidic residues.

It belongs to the GrpE family. As to quaternary structure, homodimer.

Its subcellular location is the cytoplasm. Its function is as follows. Participates actively in the response to hyperosmotic and heat shock by preventing the aggregation of stress-denatured proteins, in association with DnaK and GrpE. It is the nucleotide exchange factor for DnaK and may function as a thermosensor. Unfolded proteins bind initially to DnaJ; upon interaction with the DnaJ-bound protein, DnaK hydrolyzes its bound ATP, resulting in the formation of a stable complex. GrpE releases ADP from DnaK; ATP binding to DnaK triggers the release of the substrate protein, thus completing the reaction cycle. Several rounds of ATP-dependent interactions between DnaJ, DnaK and GrpE are required for fully efficient folding. The protein is Protein GrpE of Streptococcus pneumoniae (strain ATCC 700669 / Spain 23F-1).